Consider the following 461-residue polypeptide: MGKENAVSGNSIPIHGRPVTRALASALRASSKLITSSEVAATTQNQGRVLRAKSKRTALDEKKANAPKKRAVLKDITNVTCENSYTSCFSVAVENIKQIKKGRQSSSSSKVASSSATSQVTDAKVEVVSNSAGASLSVFTDTSLGTNETSYSIIAKPSSRSPPRPFGTVERSCGGASSPKFVDIDSDDKDPLLCSLYAPDIYYNLRVAELKRRPFPDFMEKTQRDVTETMRGILVDWLVEVSEEYTLVPDTLYLTVYLIDWFLHGNYVERQRLQLLGITCMLIASKYEEIHAPRIEEFCFITDNTYTRDQVLEMESQVLKHFSFQIYTPTSKTFLRRFLRAAQVSFPNQSLEMEFLANYLTELTLMDYPFLKFLPSIIAASAVFLAKWTLNQSSHPWNPTLEHYTTYKASDLKASVHALQDLQLNTKGCSLNSIRMKYRQDKFKSVAVFSSGELPDKLFIS.

It belongs to the cyclin family. Cyclin AB subfamily.

This chain is Cyclin-A2-4 (CYCA2-4), found in Arabidopsis thaliana (Mouse-ear cress).